The sequence spans 145 residues: Large ribosomal subunit protein uL11 (145 aa).

This sequence belongs to the universal ribosomal protein uL11 family. As to quaternary structure, part of the ribosomal stalk of the 50S ribosomal subunit. Interacts with L10 and the large rRNA to form the base of the stalk. L10 forms an elongated spine to which L12 dimers bind in a sequential fashion forming a multimeric L10(L12)X complex. In terms of processing, one or more lysine residues are methylated.

In terms of biological role, forms part of the ribosomal stalk which helps the ribosome interact with GTP-bound translation factors. This Persephonella marina (strain DSM 14350 / EX-H1) protein is Large ribosomal subunit protein uL11.